Reading from the N-terminus, the 253-residue chain is Putative tyrosine-protein phosphatase OCA1 (253 aa).

Residues 1 to 21 show a composition bias toward basic and acidic residues; the sequence is MHRTSIVEELERHQQDQKADQ. A disordered region spans residues 1 to 84; that stretch reads MHRTSIVEEL…PRMKTIVKPP (84 aa). Residues 27–65 are compositionally biased toward polar residues; that stretch reads SDASNSALQESSDPRLSTTDNTNTPEINVNDQQQEQQVA. The Tyrosine-protein phosphatase domain occupies 93 to 249; it reads NFGPVERNLY…IIVYPESAPE (157 aa). Cys186 functions as the Phosphocysteine intermediate in the catalytic mechanism.

This sequence belongs to the protein-tyrosine phosphatase family.

It localises to the cytoplasm. The enzyme catalyses O-phospho-L-tyrosyl-[protein] + H2O = L-tyrosyl-[protein] + phosphate. Functionally, putative tyrosine-protein phosphatase required for protection against superoxide stress. This Yarrowia lipolytica (strain CLIB 122 / E 150) (Yeast) protein is Putative tyrosine-protein phosphatase OCA1 (OCA1).